Reading from the N-terminus, the 55-residue chain is Large ribosomal subunit protein bL33 (55 aa).

It belongs to the bacterial ribosomal protein bL33 family.

This chain is Large ribosomal subunit protein bL33, found in Yersinia pestis (strain Pestoides F).